The sequence spans 288 residues: Nucleotide-binding protein PM0169 (288 aa).

Position 8–15 (8–15) interacts with ATP; the sequence is GHSGAGKS. 56–59 contacts GTP; the sequence is DIRN.

Belongs to the RapZ-like family.

Functionally, displays ATPase and GTPase activities. This is Nucleotide-binding protein PM0169 from Pasteurella multocida (strain Pm70).